The primary structure comprises 362 residues: Chorismate synthase (362 aa).

2 residues coordinate NADP(+): R48 and R54. FMN is bound by residues 131–133 (RSS), 243–244 (NA), G287, 302–306 (KPTSS), and R328.

Belongs to the chorismate synthase family. As to quaternary structure, homotetramer. The cofactor is FMNH2.

The enzyme catalyses 5-O-(1-carboxyvinyl)-3-phosphoshikimate = chorismate + phosphate. It participates in metabolic intermediate biosynthesis; chorismate biosynthesis; chorismate from D-erythrose 4-phosphate and phosphoenolpyruvate: step 7/7. Catalyzes the anti-1,4-elimination of the C-3 phosphate and the C-6 proR hydrogen from 5-enolpyruvylshikimate-3-phosphate (EPSP) to yield chorismate, which is the branch point compound that serves as the starting substrate for the three terminal pathways of aromatic amino acid biosynthesis. This reaction introduces a second double bond into the aromatic ring system. This chain is Chorismate synthase, found in Rhodopseudomonas palustris (strain ATCC BAA-98 / CGA009).